The primary structure comprises 326 residues: ATP synthase gamma chain (326 aa).

Belongs to the ATPase gamma chain family. F-type ATPases have 2 components, CF(1) - the catalytic core - and CF(0) - the membrane proton channel. CF(1) has five subunits: alpha(3), beta(3), gamma(1), delta(1), epsilon(1). CF(0) has three main subunits: a, b and c.

It is found in the cell membrane. Produces ATP from ADP in the presence of a proton gradient across the membrane. The gamma chain is believed to be important in regulating ATPase activity and the flow of protons through the CF(0) complex. The sequence is that of ATP synthase gamma chain from Rhodococcus opacus (strain B4).